Consider the following 356-residue polypeptide: D-alanine--D-alanine ligase (356 aa).

Residues Lys-134–Glu-339 enclose the ATP-grasp domain. His-167–Glu-222 is a binding site for ATP. Residues Asp-293, Glu-306, and Asn-308 each coordinate Mg(2+).

This sequence belongs to the D-alanine--D-alanine ligase family. The cofactor is Mg(2+). It depends on Mn(2+) as a cofactor.

It localises to the cytoplasm. It carries out the reaction 2 D-alanine + ATP = D-alanyl-D-alanine + ADP + phosphate + H(+). The protein operates within cell wall biogenesis; peptidoglycan biosynthesis. Its function is as follows. Cell wall formation. This Staphylococcus saprophyticus subsp. saprophyticus (strain ATCC 15305 / DSM 20229 / NCIMB 8711 / NCTC 7292 / S-41) protein is D-alanine--D-alanine ligase.